Consider the following 429-residue polypeptide: Adenylosuccinate synthetase (429 aa).

GTP contacts are provided by residues 12–18 (GDEGKGK) and 40–42 (GHT). Asp13 serves as the catalytic Proton acceptor. Asp13 and Gly40 together coordinate Mg(2+). IMP is bound by residues 13–16 (DEGK), 38–41 (NAGH), Thr128, Arg142, Gln223, Thr238, and Arg302. His41 functions as the Proton donor in the catalytic mechanism. 298–304 (TVTGRPR) contributes to the substrate binding site. Residues Arg304, 330–332 (LLD), and 412–414 (SVG) contribute to the GTP site.

The protein belongs to the adenylosuccinate synthetase family. Homodimer. Requires Mg(2+) as cofactor.

The protein resides in the cytoplasm. It carries out the reaction IMP + L-aspartate + GTP = N(6)-(1,2-dicarboxyethyl)-AMP + GDP + phosphate + 2 H(+). Its pathway is purine metabolism; AMP biosynthesis via de novo pathway; AMP from IMP: step 1/2. Plays an important role in the de novo pathway of purine nucleotide biosynthesis. Catalyzes the first committed step in the biosynthesis of AMP from IMP. The sequence is that of Adenylosuccinate synthetase from Lactobacillus gasseri (strain ATCC 33323 / DSM 20243 / BCRC 14619 / CIP 102991 / JCM 1131 / KCTC 3163 / NCIMB 11718 / NCTC 13722 / AM63).